Consider the following 602-residue polypeptide: Glutamine--fructose-6-phosphate aminotransferase [isomerizing] (602 aa).

Residue cysteine 2 is the Nucleophile; for GATase activity of the active site. One can recognise a Glutamine amidotransferase type-2 domain in the interval 2 to 219 (CGIIGYIGDR…DGEYAILTKD (218 aa)). 2 SIS domains span residues 280–420 (VAEE…VLGT) and 453–592 (LAET…PDKP). The active-site For Fru-6P isomerization activity is lysine 597.

As to quaternary structure, homodimer.

The protein resides in the cytoplasm. The enzyme catalyses D-fructose 6-phosphate + L-glutamine = D-glucosamine 6-phosphate + L-glutamate. In terms of biological role, catalyzes the first step in hexosamine metabolism, converting fructose-6P into glucosamine-6P using glutamine as a nitrogen source. The polypeptide is Glutamine--fructose-6-phosphate aminotransferase [isomerizing] (Thermococcus kodakarensis (strain ATCC BAA-918 / JCM 12380 / KOD1) (Pyrococcus kodakaraensis (strain KOD1))).